The primary structure comprises 229 residues: Coiled-coil domain-containing protein 134 (229 aa).

The signal sequence occupies residues 1-22 (MDLLQFLAFLFVLLLSGMGATG). Asn148 is a short sequence motif (prevents secretion from ER). N-linked (GlcNAc...) asparagine glycosylation occurs at Asn148. The tract at residues 193-229 (TDPFQKALREEEKRRKKEEKRKEIRKGPRISRSQSEL) is disordered. Positions 196–218 (FQKALREEEKRRKKEEKRKEIRK) form a coiled coil. The Nuclear localization signal motif lies at 206-213 (RRKKEEKR).

This sequence belongs to the CCDC134 family. Interacts with TADA2A. Associates with the PCAF complex via TADA2A binding. O-glycosylated, with additional sialic acid modifications. Expressed in cervical gland, cervical squamous epithelium, endometrium, stomach, kidney distal convoluted tubule, spermatogenic cells in testis, mammary gland, liver and striated muscle (at protein level). Also detected in placenta. Highest expression in testis relative to other tissues. Detected in T cells and dendritic cells; highly expressed in activated CD8(+) T cells, and also expressed at lower levels in CD4(+) T cells.

The protein resides in the endoplasmic reticulum lumen. The protein localises to the secreted. It is found in the cytoplasm. It localises to the nucleus. Functionally, molecular adapter required to prevent protein hyperglycosylation of HSP90B1: during translation, associates with nascent HSP90B1 and the STT3A catalytic component of the OST-A complex and tethers them to a specialized translocon that forms a microenvironment for HSP90B1 folding. In the CCDC134-containing translocon, STT3A associates with the SRT pseudosubstrate motif of HSP90B1, preventing access to facultative glycosylation sites until folding is completed, preventing hyperglycosylation and subsequent degradation of HSP90B1. In extracellular secreted form, promotes proliferation and activation of CD8(+) T-cells, suggesting a cytokine-like function. May inhibit ERK and JNK signaling activity. May suppress cell migration and invasion activity, via its effects on ERK and JNK signaling. May also localize in the nucleus: enhances stability of the PCAF histone acetyltransferase (HAT) complex member TADA2A and thus promotes PCAF-mediated histone acetyltransferase activity. Has a critical role in the regulation of osteogenesis and bone development. This is Coiled-coil domain-containing protein 134 from Homo sapiens (Human).